We begin with the raw amino-acid sequence, 444 residues long: Enolase 1 (444 aa).

The substrate site is built by histidine 165 and glutamate 174. The Proton donor role is filled by glutamate 217. Positions 303 and 330 each coordinate substrate. Catalysis depends on lysine 355, which acts as the Proton acceptor. Substrate is bound by residues 382-385 and lysine 406; that span reads SHRS.

This sequence belongs to the enolase family. Homodimer. Mg(2+) serves as cofactor.

The protein localises to the cytoplasm. It catalyses the reaction (2R)-2-phosphoglycerate = phosphoenolpyruvate + H2O. Its pathway is carbohydrate degradation; glycolysis; pyruvate from D-glyceraldehyde 3-phosphate: step 4/5. The polypeptide is Enolase 1 (ENO1) (Toxoplasma gondii).